Here is a 173-residue protein sequence, read N- to C-terminus: Co-chaperone protein HscB homolog (173 aa).

A J domain is found at Cys5–Leu77.

Belongs to the HscB family. In terms of assembly, interacts with HscA and stimulates its ATPase activity.

Functionally, co-chaperone involved in the maturation of iron-sulfur cluster-containing proteins. Seems to help targeting proteins to be folded toward HscA. This Pseudomonas paraeruginosa (strain DSM 24068 / PA7) (Pseudomonas aeruginosa (strain PA7)) protein is Co-chaperone protein HscB homolog.